The primary structure comprises 306 residues: Pantothenate kinase (306 aa).

91–98 (GSVAVGKS) is an ATP binding site.

It belongs to the prokaryotic pantothenate kinase family.

Its subcellular location is the cytoplasm. The catalysed reaction is (R)-pantothenate + ATP = (R)-4'-phosphopantothenate + ADP + H(+). The protein operates within cofactor biosynthesis; coenzyme A biosynthesis; CoA from (R)-pantothenate: step 1/5. This chain is Pantothenate kinase (coaA), found in Streptococcus pyogenes serotype M18 (strain MGAS8232).